The following is a 304-amino-acid chain: Glycosyltransferase AglE (304 aa).

Belongs to the glycosyltransferase 2 family.

It is found in the cell membrane. It participates in cell surface structure biogenesis; S-layer biogenesis. In terms of biological role, involved in the assembly of a N-linked pentasaccharide that decorates the S-layer glycoprotein and flagellins. Catalyzes the addition to the dolichol phosphate carrier of the hexuronic acid found at position 4 of the pentasaccharide. The polypeptide is Glycosyltransferase AglE (aglE) (Haloferax volcanii (strain ATCC 29605 / DSM 3757 / JCM 8879 / NBRC 14742 / NCIMB 2012 / VKM B-1768 / DS2) (Halobacterium volcanii)).